A 598-amino-acid polypeptide reads, in one-letter code: Trichothecene efflux pump TRI12 (598 aa).

The chain crosses the membrane as a helical span at residues 42-62 (IVASFAAFSMNVVATYFVLQA). N-linked (GlcNAc...) asparagine glycosylation occurs at N79. A run of 2 helical transmembrane segments spans residues 109 to 129 (PFVI…CTAT) and 135 to 155 (LAAM…PLFI). A glycan (N-linked (GlcNAc...) asparagine) is linked at N161. 10 helical membrane-spanning segments follow: residues 165-185 (FLGL…SPYL), 197-217 (WIFY…IIWY), 241-261 (WIGI…VSWG), 273-293 (VIGL…YEVY), 312-332 (FVCI…LVIM), 356-376 (ATAS…FHLV), 381-401 (WQIL…SSIN), 409-429 (IALS…TMLL), 442-462 (AFAV…AAFI), and 533-553 (ANVY…SLCM). Residues 579 to 598 (LEGNSESQPSPIILSMADKE) form a disordered region.

The protein belongs to the major facilitator superfamily.

It is found in the cell membrane. Efflux pump that provides the dual role of trichothecene export and self-protection by allowing the fungus to evade the harmful effect of its own trichothecene production. This chain is Trichothecene efflux pump TRI12, found in Fusarium sporotrichioides.